Reading from the N-terminus, the 430-residue chain is Probable carboxypeptidase AFLA_037450 (430 aa).

A signal peptide spans 1-16 (MKSIYSLVLCTALTAA). A glycan (N-linked (GlcNAc...) asparagine) is linked at N84. D156 contacts Zn(2+). The active-site Proton acceptor is E188. A Zn(2+)-binding site is contributed by E189. N285 carries N-linked (GlcNAc...) asparagine glycosylation.

It belongs to the peptidase M20A family. The cofactor is Zn(2+).

It is found in the secreted. The protein is Probable carboxypeptidase AFLA_037450 of Aspergillus flavus (strain ATCC 200026 / FGSC A1120 / IAM 13836 / NRRL 3357 / JCM 12722 / SRRC 167).